The chain runs to 251 residues: L-ascorbate peroxidase 2, cytosolic (251 aa).

Catalysis depends on H43, which acts as the Proton acceptor. The tract at residues 113-137 is disordered; the sequence is EVPFHPGRQDKPEPPPEGRLPDATQ. Basic and acidic residues predominate over residues 119–132; sequence GRQDKPEPPPEGRL. H164 contributes to the heme b binding site. Residues T165, T181, N183, I186, and D188 each coordinate K(+).

Belongs to the peroxidase family. Ascorbate peroxidase subfamily. The cofactor is heme b. Expressed in aerial vegetative parts and reproductive organs. Expressed in roots, leaves, stems and flowers. Expressed in young leaves, internodes, blade ears, stems and anthers.

It localises to the cytoplasm. The catalysed reaction is L-ascorbate + H2O2 = L-dehydroascorbate + 2 H2O. Its activity is regulated as follows. Inhibited by p-chloromercuriphenylsulfonic acid (CMPSA). Plays a key role in hydrogen peroxide removal. Plays an important role in plant growth and development by protecting the seedlings from abiotic stresses through scavenging reactive oxygen species. Required for pollen viability. The polypeptide is L-ascorbate peroxidase 2, cytosolic (Oryza sativa subsp. japonica (Rice)).